Reading from the N-terminus, the 672-residue chain is DNA ligase (672 aa).

NAD(+) contacts are provided by residues 34–38, 83–84, and glutamate 113; these read DSVYD and SL. Residue lysine 115 is the N6-AMP-lysine intermediate of the active site. NAD(+) is bound by residues arginine 136, glutamate 170, lysine 286, and lysine 310. Residues cysteine 404, cysteine 407, cysteine 422, and cysteine 427 each coordinate Zn(2+). The BRCT domain maps to 592–672; it reads STDSSFNGLR…EFIQQMEEES (81 aa).

Belongs to the NAD-dependent DNA ligase family. LigA subfamily. It depends on Mg(2+) as a cofactor. The cofactor is Mn(2+).

It catalyses the reaction NAD(+) + (deoxyribonucleotide)n-3'-hydroxyl + 5'-phospho-(deoxyribonucleotide)m = (deoxyribonucleotide)n+m + AMP + beta-nicotinamide D-nucleotide.. Functionally, DNA ligase that catalyzes the formation of phosphodiester linkages between 5'-phosphoryl and 3'-hydroxyl groups in double-stranded DNA using NAD as a coenzyme and as the energy source for the reaction. It is essential for DNA replication and repair of damaged DNA. This chain is DNA ligase, found in Ligilactobacillus salivarius (strain UCC118) (Lactobacillus salivarius).